The sequence spans 399 residues: Imidazolonepropionase (399 aa).

2 residues coordinate Fe(3+): histidine 68 and histidine 70. Zn(2+) contacts are provided by histidine 68 and histidine 70. Residues arginine 77, tyrosine 140, and histidine 173 each contribute to the 4-imidazolone-5-propanoate site. Tyrosine 140 contributes to the N-formimidoyl-L-glutamate binding site. Histidine 238 serves as a coordination point for Fe(3+). Histidine 238 contributes to the Zn(2+) binding site. Glutamine 241 lines the 4-imidazolone-5-propanoate pocket. Residue aspartate 313 coordinates Fe(3+). Aspartate 313 lines the Zn(2+) pocket. Positions 315 and 317 each coordinate N-formimidoyl-L-glutamate. A 4-imidazolone-5-propanoate-binding site is contributed by threonine 318.

This sequence belongs to the metallo-dependent hydrolases superfamily. HutI family. Requires Zn(2+) as cofactor. Fe(3+) is required as a cofactor.

It is found in the cytoplasm. The enzyme catalyses 4-imidazolone-5-propanoate + H2O = N-formimidoyl-L-glutamate. The protein operates within amino-acid degradation; L-histidine degradation into L-glutamate; N-formimidoyl-L-glutamate from L-histidine: step 3/3. Functionally, catalyzes the hydrolytic cleavage of the carbon-nitrogen bond in imidazolone-5-propanoate to yield N-formimidoyl-L-glutamate. It is the third step in the universal histidine degradation pathway. This is Imidazolonepropionase from Rhizorhabdus wittichii (strain DSM 6014 / CCUG 31198 / JCM 15750 / NBRC 105917 / EY 4224 / RW1) (Sphingomonas wittichii).